We begin with the raw amino-acid sequence, 437 residues long: Nickel-cobalt-cadmium resistance protein NccC (437 aa).

The N-terminal stretch at 1 to 48 is a signal peptide; the sequence is MGAVLKAEANIFRSHPFRPMNQATPKKLRSAPCIGVALLLMATGSIQA.

This sequence belongs to the outer membrane factor (OMF) (TC 1.B.17) family.

Its function is as follows. Component of the NCC cation-efflux system that confers resistance to nickel, cobalt and cadmium. In Alcaligenes xylosoxydans xylosoxydans (Achromobacter xylosoxidans), this protein is Nickel-cobalt-cadmium resistance protein NccC (nccC).